Reading from the N-terminus, the 76-residue chain is Translational regulator CsrA (76 aa).

Belongs to the CsrA/RsmA family. As to quaternary structure, homodimer; the beta-strands of each monomer intercalate to form a hydrophobic core, while the alpha-helices form wings that extend away from the core.

Its subcellular location is the cytoplasm. Its function is as follows. A translational regulator that binds mRNA to regulate translation initiation and/or mRNA stability. Usually binds in the 5'-UTR at or near the Shine-Dalgarno sequence preventing ribosome-binding, thus repressing translation. Its main target seems to be the major flagellin gene, while its function is anatagonized by FliW. This Pseudothermotoga lettingae (strain ATCC BAA-301 / DSM 14385 / NBRC 107922 / TMO) (Thermotoga lettingae) protein is Translational regulator CsrA.